The primary structure comprises 309 residues: ATP-dependent Clp protease proteolytic subunit 3, chloroplastic (309 aa).

A chloroplast-targeting transit peptide spans 1-70 (MEMSLRLASS…WDVSSFSIDS (70 aa)). Valine 71 bears the N-acetylvaline mark. Serine 164 acts as the Nucleophile in catalysis. The active site involves histidine 189. Threonine 194 is subject to Phosphothreonine. The tract at residues 290–309 (DNTNLPSERSMTQNGYAAIE) is disordered. A compositionally biased stretch (polar residues) spans 292–309 (TNLPSERSMTQNGYAAIE).

Belongs to the peptidase S14 family. Component of the chloroplastic Clp protease core complex which consist of at least 16 proteins: CLPP4 (3 copies), CLPP5 (3 copies), CLPR4 (2 copies), ClpP1 (1 copy), CLPP6 (1 copy), CLPR2 (1 copy), CLPT1 (1 copy), CLPT2 (1 copy) and 3 copies of CLPP3 and/or CLPR1 and/or CLPR3. The core complex is organized in two heptameric rings, one containing CLPP3,4,5,6 in a 1:2:3:1 ratio and the other CLPP1 and CLPR1,2,3,4 in a 3:1:1:1:1 ratio. Interacts with CHIP. In terms of processing, ubiquitinated in vitro by CHIP. Mostly expressed in leaves. Also detected in stems, and to a lower extent, in roots (at protein level).

The protein localises to the plastid. It localises to the chloroplast stroma. It carries out the reaction Hydrolysis of proteins to small peptides in the presence of ATP and magnesium. alpha-casein is the usual test substrate. In the absence of ATP, only oligopeptides shorter than five residues are hydrolyzed (such as succinyl-Leu-Tyr-|-NHMec, and Leu-Tyr-Leu-|-Tyr-Trp, in which cleavage of the -Tyr-|-Leu- and -Tyr-|-Trp bonds also occurs).. Functionally, cleaves peptides in various proteins in a process that requires ATP hydrolysis. Has a chymotrypsin-like activity. Plays a major role in the degradation of misfolded proteins. In the absence of CLPP3, modified ClpPR core(s) could be formed, albeit at strongly reduced levels. The protein is ATP-dependent Clp protease proteolytic subunit 3, chloroplastic of Arabidopsis thaliana (Mouse-ear cress).